The sequence spans 83 residues: uncharacterized protein (83 aa).

A helical transmembrane segment spans residues 58 to 80 (YWGYGAAYGISLGLIAGVALAGL).

The protein localises to the membrane. This is an uncharacterized protein from Bacillus subtilis (strain 168).